The sequence spans 315 residues: Olfactory receptor 4K3 (315 aa).

Residues Met1 to Ile25 lie on the Extracellular side of the membrane. N-linked (GlcNAc...) asparagine glycosylation is present at Asn5. The helical transmembrane segment at Phe26 to Ile49 threads the bilayer. At Ala50 to Ser57 the chain is on the cytoplasmic side. A helical transmembrane segment spans residues Pro58–Pro79. The Extracellular portion of the chain corresponds to Lys80 to Gln100. Cysteines 97 and 189 form a disulfide. A helical membrane pass occupies residues Met101–Phe120. Topologically, residues Asp121–Arg139 are cytoplasmic. Residues Met140–Ser158 traverse the membrane as a helical segment. Topologically, residues Gln159–Leu195 are extracellular. Residues Gly196–Thr219 form a helical membrane-spanning segment. The Cytoplasmic portion of the chain corresponds to Ile220–Lys235. A helical membrane pass occupies residues Ala236 to Tyr258. The Extracellular portion of the chain corresponds to Val259 to Lys269. The helical transmembrane segment at Val270–Val289 threads the bilayer. The Cytoplasmic portion of the chain corresponds to Arg290–Pro315.

This sequence belongs to the G-protein coupled receptor 1 family.

The protein resides in the cell membrane. Its function is as follows. Odorant receptor. The sequence is that of Olfactory receptor 4K3 (OR4K3) from Homo sapiens (Human).